The sequence spans 144 residues: MEKFLDINEIKRIIPHRYPFLLVDKITELEEGKSAVGYKNVTVNEYFFNGHFPEEPVMPGVLIIEALAQVGAVAILSKEEFKGKIAYFGGINKAKFRKKVVPGDELKLSIELTKIKGVAGVGKAVATVDGKVAAEAELLFVIGK.

Residue His-51 is part of the active site.

This sequence belongs to the thioester dehydratase family. FabZ subfamily.

The protein localises to the cytoplasm. It catalyses the reaction a (3R)-hydroxyacyl-[ACP] = a (2E)-enoyl-[ACP] + H2O. In terms of biological role, involved in unsaturated fatty acids biosynthesis. Catalyzes the dehydration of short chain beta-hydroxyacyl-ACPs and long chain saturated and unsaturated beta-hydroxyacyl-ACPs. This is 3-hydroxyacyl-[acyl-carrier-protein] dehydratase FabZ from Clostridium botulinum (strain Okra / Type B1).